The primary structure comprises 330 residues: Serine/threonine-protein phosphatase PP1-alpha catalytic subunit (330 aa).

Serine 2 is subject to N-acetylserine. Phosphoserine is present on residues serine 2 and serine 22. Mn(2+) contacts are provided by aspartate 64, histidine 66, aspartate 92, and asparagine 124. Histidine 125 serves as the catalytic Proton donor. Mn(2+) is bound by residues histidine 173 and histidine 248. Lysine 305 carries the post-translational modification N6-acetyllysine. Tyrosine 306 is modified (phosphotyrosine). Residues 306 to 330 (YGQFSGLNPGGRPITPPRNSAKAKK) are disordered. Residue threonine 320 is modified to Phosphothreonine. Serine 325 carries the post-translational modification Phosphoserine.

It belongs to the PPP phosphatase family. PP-1 subfamily. As to quaternary structure, PP1 comprises a catalytic subunit, PPP1CA, PPP1CB or PPP1CC, which is folded into its native form by inhibitor 2 and glycogen synthetase kinase 3, and then complexed to one or several targeting or regulatory subunits. PPP1R12A, PPP1R12B and PPP1R12C mediate binding to myosin. PPP1R3A (in skeletal muscle), PPP1R3B (in liver), PPP1R3C, PPP1R3D and PPP1R3F (in brain) mediate binding to glycogen. Interacts with PPP1R15A and PPP1R15B; the interactions mediate binding to EIF2S1. Part of a complex containing PPP1R15B, PP1 and NCK1/2. Interacts with PPP1R9A, PPP1R9B and PPP1R7. Interacts with YLPM1. Forms a complex with ILF2, ILF3, YLPM1, KHDRBS1, RBMX and NCOA5. Interacts with NOM1 and PPP1R8. Interacts with PPP1R16B. Interacts with RPSA only in the presence of PPP1R16B. Component of the PNUTS-PP1 phosphatase complex, composed of PPP1R10/PNUTS, TOX4, WDR82, and PPP1CA or PPP1CB or PPP1CC. Interacts with PPP1R10/PNUTS and PPP1R8. Interacts with WDR82 in the presence of PPP1R10/PNUTS. Interacts with PPP1R39. transition from mitosis into interphase. Interacts with TRIM28; the interaction dephosphorylates TRIM28 on 'Ser-824' and forms a complex at the p21 promoter site. Interacts with NEK2. Interacts with PHACTR4; which acts as an activator of PP1 activity. Interacts with FER; this promotes phosphorylation at Thr-320. Interacts with BTBD10. Interacts with KCTD20. Interacts with FOXP3. Interacts with CENPA. Interacts with ATG16L1. Found in a complex with PPP1CA, PPP1CC, SHC1 and PEAK1. Interacts with tensin TNS1. Interacts with SAXO4, PPP1R21, PPP1R26, PPP1R27, PPP1R35, PPP1R36, PPP1R37, SH3RF2, ELFN1 and ELFN2. Interacts with TPRN; the interaction results in inhibition of PPC1A phosphatase activity. Interacts with SKA1 (via C-terminus); the interaction is direct and required for the recruitment of PP1 to the kinetochore. Interacts with the KNL1 complex subunit KNL1; the interaction is direct and mutually exclusive with KNL1 binding to microtubules. Component of the SHOC2-MRAS-PP1c (SMP) complex consisting of SHOC2, GTP-bound M-Ras/MRAS and the catalytic subunit of protein phosphatase 1 (either PPP1CA, PPP1CB or PPP1CC). SHOC2 and PP1c preferably bind M-Ras/MRAS, but they also bind K-Ras/KRAS, N-Ras/NRAS and H-Ras/HRAS; these interactions are GTP-dependent and both SHOC2 and PP1c are required to form a stable complex. Interacts with SHOC2 in the absence of Ras GTPases. Mn(2+) serves as cofactor. In terms of processing, phosphorylated. Dephosphorylated at Thr-320 in the presence of ionizing radiation.

It localises to the cytoplasm. It is found in the nucleus. Its subcellular location is the nucleoplasm. The protein localises to the nucleolus. The enzyme catalyses O-phospho-L-seryl-[protein] + H2O = L-seryl-[protein] + phosphate. The catalysed reaction is O-phospho-L-threonyl-[protein] + H2O = L-threonyl-[protein] + phosphate. Its function is as follows. Protein phosphatase that associates with over 200 regulatory proteins to form highly specific holoenzymes which dephosphorylate hundreds of biological targets. Protein phosphatase 1 (PP1) is essential for cell division, transcription elongation, and participates in the regulation of glycogen metabolism, muscle contractility and protein synthesis. Involved in regulation of ionic conductances and long-term synaptic plasticity. May play an important role in dephosphorylating substrates such as the postsynaptic density-associated Ca(2+)/calmodulin dependent protein kinase II. Catalytic component of the PNUTS-PP1 protein phosphatase complex, a protein phosphatase 1 (PP1) complex that promotes RNA polymerase II transcription pause-release, allowing transcription elongation: the PNUTS-PP1 complex mediates the release of RNA polymerase II from promoter-proximal region of genes by catalyzing dephosphorylation of proteins involved in transcription, such as AFF4, CDK9, MEPCE, INTS12, NCBP1, POLR2M/GDOWN1 and SUPT6H. The PNUTS-PP1 complex also regulates transcription termination by mediating dephosphorylation of SUPT5H in termination zones downstream of poly(A) sites, thereby promoting deceleration of RNA polymerase II transcription. PNUTS-PP1 complex is also involved in the response to replication stress by mediating dephosphorylation of POLR2A at 'Ser-5' of the CTD, promoting RNA polymerase II degradation. PNUTS-PP1 also plays a role in the control of chromatin structure and cell cycle progression during the transition from mitosis into interphase. Regulates NEK2 function in terms of kinase activity and centrosome number and splitting, both in the presence and absence of radiation-induced DNA damage. Regulator of neural tube and optic fissure closure, and enteric neural crest cell (ENCCs) migration during development. In balance with CSNK1D and CSNK1E, determines the circadian period length, through the regulation of the speed and rhythmicity of PER1 and PER2 phosphorylation. May dephosphorylate CSNK1D and CSNK1E. Dephosphorylates the 'Ser-418' residue of FOXP3 in regulatory T-cells (Treg) from patients with rheumatoid arthritis, thereby inactivating FOXP3 and rendering Treg cells functionally defective. Dephosphorylates CENPA. Dephosphorylates the 'Ser-139' residue of ATG16L1 causing dissociation of ATG12-ATG5-ATG16L1 complex, thereby inhibiting autophagy. Together with PPP1CC (PP1-gamma subunit), dephosphorylates IFIH1/MDA5 and RIG-I leading to their activation and a functional innate immune response. Core component of the SHOC2-MRAS-PP1c (SMP) holophosphatase complex that regulates the MAPK pathway activation. The SMP complex specifically dephosphorylates the inhibitory phosphorylation at 'Ser-259' of RAF1 kinase, 'Ser-365' of BRAF kinase and 'Ser-214' of ARAF kinase, stimulating their kinase activities. The SMP complex enhances the dephosphorylation activity and substrate specificity of PP1c. This chain is Serine/threonine-protein phosphatase PP1-alpha catalytic subunit (PPP1CA), found in Canis lupus familiaris (Dog).